Reading from the N-terminus, the 267-residue chain is Hydroxyethylthiazole kinase (267 aa).

Position 46 (methionine 46) interacts with substrate. The ATP site is built by arginine 121 and threonine 167. Alanine 194 lines the substrate pocket.

It belongs to the Thz kinase family. Mg(2+) serves as cofactor.

The enzyme catalyses 5-(2-hydroxyethyl)-4-methylthiazole + ATP = 4-methyl-5-(2-phosphooxyethyl)-thiazole + ADP + H(+). Its pathway is cofactor biosynthesis; thiamine diphosphate biosynthesis; 4-methyl-5-(2-phosphoethyl)-thiazole from 5-(2-hydroxyethyl)-4-methylthiazole: step 1/1. Functionally, catalyzes the phosphorylation of the hydroxyl group of 4-methyl-5-beta-hydroxyethylthiazole (THZ). The protein is Hydroxyethylthiazole kinase of Rhizobium leguminosarum bv. trifolii (strain WSM2304).